The primary structure comprises 486 residues: Monocarboxylate transporter 12 (486 aa).

Over methionine 1–leucine 9 the chain is Cytoplasmic. 12 helical membrane-spanning segments follow: residues alanine 10 to isoleucine 30, alanine 58 to valine 78, alanine 86 to threonine 106, leucine 115 to glycine 135, isoleucine 148 to isoleucine 168, leucine 177 to isoleucine 197, phenylalanine 253 to tyrosine 273, alanine 289 to leucine 309, tyrosine 320 to leucine 340, phenylalanine 353 to glycine 373, valine 383 to valine 403, and threonine 410 to valine 430. Topologically, residues arginine 431–threonine 486 are cytoplasmic.

This sequence belongs to the major facilitator superfamily. Monocarboxylate porter (TC 2.A.1.13) family. In terms of assembly, interacts with isoform 2 of BSG; this interaction is required for its localization to the plasma membrane. As to expression, highly expressed in the lung, liver, kidney, and pancreas. Expressed in eye lens.

It is found in the cell membrane. Its subcellular location is the basolateral cell membrane. The catalysed reaction is creatine(in) = creatine(out). The enzyme catalyses guanidinoacetate(in) = guanidinoacetate(out). Creatine uptake is inhibited by carbonyl cyanide 3-chlorophenylhydrazone (CCCP) and by valinomycin. Functionally, functions as a transporter for creatine and as well for its precursor guanidinoacetate. Transport of creatine and GAA is independent of resting membrane potential and extracellular Na(+), Cl(-), or pH. Contributes to the process of creatine biosynthesis and distribution. This is Monocarboxylate transporter 12 from Mus musculus (Mouse).